We begin with the raw amino-acid sequence, 113 residues long: Putative insulin-like growth factor 2-associated protein (113 aa).

As to expression, expressed in fetal and adult liver.

This chain is Putative insulin-like growth factor 2-associated protein, found in Homo sapiens (Human).